We begin with the raw amino-acid sequence, 418 residues long: Outer membrane protein assembly factor BamB (418 aa).

Positions 1–28 (MFHNTCGRKGRFARAMGMALAISVTLSG) are cleaved as a signal peptide. Cys-29 carries the N-palmitoyl cysteine lipid modification. Cys-29 is lipidated: S-diacylglycerol cysteine.

The protein belongs to the BamB family. Part of the Bam complex.

It localises to the cell outer membrane. Its function is as follows. Part of the outer membrane protein assembly complex, which is involved in assembly and insertion of beta-barrel proteins into the outer membrane. In Alteromonas naphthalenivorans, this protein is Outer membrane protein assembly factor BamB.